Here is a 143-residue protein sequence, read N- to C-terminus: Histone H2B.2, sperm (143 aa).

Residues 1–49 (MPKSPSKSSPRKGSPRKGSPRKGSPKRGGKGAKRAGKGGRRNVVKRRRR) form a disordered region. 5 consecutive short sequence motifs (SPKK motif) follow at residues 4–7 (SPSK), 9–12 (SPRK), 14–17 (SPRK), 19–22 (SPRK), and 24–27 (SPKR). Residues 9–49 (SPRKGSPRKGSPRKGSPKRGGKGAKRAGKGGRRNVVKRRRR) show a composition bias toward basic residues. Phosphoserine occurs at positions 14, 19, and 24. O-linked (GlcNAc) serine glycosylation is present at Ser-129. Lys-137 is covalently cross-linked (Glycyl lysine isopeptide (Lys-Gly) (interchain with G-Cter in ubiquitin)).

Belongs to the histone H2B family. As to quaternary structure, the nucleosome is a histone octamer containing two molecules each of H2A, H2B, H3 and H4 assembled in one H3-H4 heterotetramer and two H2A-H2B heterodimers. The octamer wraps approximately 147 bp of DNA. Monoubiquitination of Lys-137 gives a specific tag for epigenetic transcriptional activation and is also prerequisite for histone H3 'Lys-4' and 'Lys-79' methylation. Post-translationally, phosphorylated on SPKK motifs 3, 4 and 5; which may regulate DNA binding. Dephosphorylated during maturation of spermatids to mature sperm and rephosphorylated at fertilization. In terms of processing, glcNAcylation at Ser-129 promotes monoubiquitination of Lys-137. It fluctuates in response to extracellular glucose, and associates with transcribed genes.

The protein localises to the nucleus. The protein resides in the chromosome. Functionally, core component of nucleosome. Nucleosomes wrap and compact DNA into chromatin, limiting DNA accessibility to the cellular machineries which require DNA as a template. Histones thereby play a central role in transcription regulation, DNA repair, DNA replication and chromosomal stability. DNA accessibility is regulated via a complex set of post-translational modifications of histones, also called histone code, and nucleosome remodeling. The polypeptide is Histone H2B.2, sperm (Psammechinus miliaris (Green sea urchin)).